Consider the following 576-residue polypeptide: Alpha-1,3-arabinosyltransferase XAT3 (576 aa).

Residues 1–19 lie on the Cytoplasmic side of the membrane; that stretch reads MKAGERPKLVRGVRQESRR. The helical; Signal-anchor for type II membrane protein transmembrane segment at 20-40 threads the bilayer; the sequence is FRLLVIVVGFFLVSLTFVFVS. At 41–576 the chain is on the lumenal side; that stretch reads KPDAILFSLN…LLEALDNLNP (536 aa). The tract at residues 64–171 is disordered; it reads IQQKVNEPSG…KHKVTLPTVS (108 aa). 3 stretches are compositionally biased toward basic and acidic residues: residues 73 to 98, 126 to 138, and 147 to 163; these read GESR…DAKP, THNK…KSHQ, and GESK…EQKH. Residues Asn172, Asn375, and Asn443 are each glycosylated (N-linked (GlcNAc...) asparagine).

Belongs to the glycosyltransferase 61 family.

Its subcellular location is the golgi apparatus membrane. The protein operates within glycan metabolism. Functionally, glycosyltransferase involved in the arabinosylation of xylan, the major hemicellulose (non-cellulosic component) of primary and secondary walls of angiosperms. Possesses alpha-1,3-arabinosyltransferase activity, transferring an arabinofuranose residue to the xylan backbone. The sequence is that of Alpha-1,3-arabinosyltransferase XAT3 from Oryza sativa subsp. japonica (Rice).